The primary structure comprises 273 residues: BTB and MATH domain-containing protein 15 (273 aa).

Residues Glu7–Val123 enclose the MATH domain. The 60-residue stretch at Ser147 to Tyr206 folds into the BTB domain.

In terms of assembly, interacts with cul-3.

The protein operates within protein modification; protein ubiquitination. Functionally, probable substrate-specific adapter of an E3 ubiquitin-protein ligase complex which mediates the ubiquitination and subsequent proteasomal degradation of target proteins. This chain is BTB and MATH domain-containing protein 15 (bath-15), found in Caenorhabditis elegans.